We begin with the raw amino-acid sequence, 166 residues long: Putative transmembrane protein ORF166 (166 aa).

Helical transmembrane passes span 35–55, 60–80, and 124–144; these read IILVFLITMPVRFFICIFAGL, PICVLINLLPPLAIAIPFVTA, and IFCLVGIIIADVLNPILAFIN.

The protein localises to the host membrane. The protein is Putative transmembrane protein ORF166 of Acidianus convivator (ABV).